We begin with the raw amino-acid sequence, 539 residues long: Gamma-2-syntrophin (539 aa).

One can recognise a PDZ domain in the interval 73–156 (TVTLRRQPVG…EVTITVEYLR (84 aa)). Low complexity-rich tracts occupy residues 168 to 183 (SPGP…SSPL) and 194 to 205 (SSTTAPSSPSSP). The tract at residues 168–209 (SPGPSSDHSSGASSPLFDSGLHLNGNSSTTAPSSPSSPIAKD) is disordered. A PH domain is found at 296–421 (QVVHMGWVNE…WEKSFQRATF (126 aa)).

This sequence belongs to the syntrophin family. In terms of assembly, interacts with the dystrophin protein DMD and related proteins DTNA and DTNB. Widely expressed. Strong expression in brain and testis. In CNS, it is expressed in the perikaryon and proximal portion of the neuronal processes. Strong expression in the hippocampus, neuron-rich dendate granule cells, and pyramidal cell layers. Highly expressed in neurons of the cerebral cortex. Also expressed in the cerebellar cortex, deep cerebellar nuclei, thalamus, and basal ganglia.

It localises to the cell membrane. It is found in the sarcolemma. The protein resides in the cytoplasm. Its subcellular location is the cytoskeleton. Adapter protein that binds to and probably organizes the subcellular localization of a variety of proteins. May link various receptors to the actin cytoskeleton and the dystrophin glycoprotein complex. In Homo sapiens (Human), this protein is Gamma-2-syntrophin (SNTG2).